A 120-amino-acid polypeptide reads, in one-letter code: NAD(P)H-quinone oxidoreductase subunit 3 (120 aa).

3 consecutive transmembrane segments (helical) span residues 1 to 21 (MFVLSGYEYLLGFFIICSLVP), 64 to 84 (MFALVFVVFDVETVFLYPWAV), and 89 to 109 (LGLLAFIEALVFIAILVVALV).

The protein belongs to the complex I subunit 3 family. As to quaternary structure, NDH-1 can be composed of about 15 different subunits; different subcomplexes with different compositions have been identified which probably have different functions.

It localises to the cellular thylakoid membrane. It catalyses the reaction a plastoquinone + NADH + (n+1) H(+)(in) = a plastoquinol + NAD(+) + n H(+)(out). It carries out the reaction a plastoquinone + NADPH + (n+1) H(+)(in) = a plastoquinol + NADP(+) + n H(+)(out). Functionally, NDH-1 shuttles electrons from an unknown electron donor, via FMN and iron-sulfur (Fe-S) centers, to quinones in the respiratory and/or the photosynthetic chain. The immediate electron acceptor for the enzyme in this species is believed to be plastoquinone. Couples the redox reaction to proton translocation, and thus conserves the redox energy in a proton gradient. Cyanobacterial NDH-1 also plays a role in inorganic carbon-concentration. The sequence is that of NAD(P)H-quinone oxidoreductase subunit 3 from Nostoc punctiforme (strain ATCC 29133 / PCC 73102).